A 430-amino-acid chain; its full sequence is UPF0597 protein DSY1109 (430 aa).

Belongs to the UPF0597 family.

The sequence is that of UPF0597 protein DSY1109 from Desulfitobacterium hafniense (strain Y51).